Here is a 253-residue protein sequence, read N- to C-terminus: Hydroxyacylglutathione hydrolase (253 aa).

Zn(2+) contacts are provided by H54, H56, D58, H59, H112, D131, and H169.

This sequence belongs to the metallo-beta-lactamase superfamily. Glyoxalase II family. As to quaternary structure, monomer. It depends on Zn(2+) as a cofactor.

The enzyme catalyses an S-(2-hydroxyacyl)glutathione + H2O = a 2-hydroxy carboxylate + glutathione + H(+). The protein operates within secondary metabolite metabolism; methylglyoxal degradation; (R)-lactate from methylglyoxal: step 2/2. Thiolesterase that catalyzes the hydrolysis of S-D-lactoyl-glutathione to form glutathione and D-lactic acid. This chain is Hydroxyacylglutathione hydrolase, found in Bartonella henselae (strain ATCC 49882 / DSM 28221 / CCUG 30454 / Houston 1) (Rochalimaea henselae).